A 412-amino-acid polypeptide reads, in one-letter code: Pyruvate dehydrogenase E1 component subunit alpha, mitochondrial (412 aa).

Pyruvate is bound by residues H104, Y130, R131, A169, G177, V179, D208, G209, A210, N237, and Y239. Residues Y130 and R131 each coordinate thiamine diphosphate. Thiamine diphosphate contacts are provided by G177, V179, D208, G209, A210, and N237. D208 contacts Mg(2+). Residues N237 and Y239 each coordinate Mg(2+). Residue H304 coordinates thiamine diphosphate.

Tetramer of 2 alpha and 2 beta subunits. It depends on thiamine diphosphate as a cofactor. Requires Mg(2+) as cofactor.

Its subcellular location is the mitochondrion matrix. It carries out the reaction N(6)-[(R)-lipoyl]-L-lysyl-[protein] + pyruvate + H(+) = N(6)-[(R)-S(8)-acetyldihydrolipoyl]-L-lysyl-[protein] + CO2. Its activity is regulated as follows. E1 activity is regulated by phosphorylation (inactivation) and dephosphorylation (activation) of the alpha subunit. The pyruvate dehydrogenase complex catalyzes the overall conversion of pyruvate to acetyl-CoA and CO(2). It contains multiple copies of three enzymatic components: pyruvate dehydrogenase (E1), dihydrolipoamide acetyltransferase (E2) and lipoamide dehydrogenase (E3). In Kluyveromyces lactis (strain ATCC 8585 / CBS 2359 / DSM 70799 / NBRC 1267 / NRRL Y-1140 / WM37) (Yeast), this protein is Pyruvate dehydrogenase E1 component subunit alpha, mitochondrial (PDA1).